Here is a 338-residue protein sequence, read N- to C-terminus: Mitoferrin-1 (338 aa).

The segment at 1 to 37 (MELRRGGVGNQAAGRRMDGDCRDGGCGSKDAGSEDYE) is disordered. Solcar repeat units follow at residues 43–131 (ASVS…MKRT), 141–225 (NSHL…LQEQ), and 232–326 (YNPQ…FKYI). 6 helical membrane-spanning segments follow: residues 45-64 (VSTH…SIMY), 106-125 (GLNV…FACY), 143-162 (HLAN…AVMN), 200-219 (SYTT…FITY), 234-253 (PQSH…AATT), and 301-320 (GIQA…WSVY).

It belongs to the mitochondrial carrier (TC 2.A.29) family. In terms of assembly, interacts with ACB10; this interaction stabilizes SLC25A37 and enhances the function of SLC25A37 to import mitochondrial iron during erythroid differentiation. Highly expressed in hematopoietic organs, fetal liver, bone marrow and spleen.

It is found in the mitochondrion inner membrane. It carries out the reaction Fe(2+)(in) = Fe(2+)(out). Its function is as follows. Mitochondrial iron transporter that specifically mediates iron uptake in developing erythroid cells, thereby playing an essential role in heme biosynthesis. The sequence is that of Mitoferrin-1 (Slc25a37) from Mus musculus (Mouse).